Here is a 327-residue protein sequence, read N- to C-terminus: Taste receptor type 2 member 102 (327 aa).

At 1–7 (MEPVIYS) the chain is on the extracellular side. The chain crosses the membrane as a helical span at residues 8-28 (FATLLIHVEFIFGNLSNGFIV). Residues 29-46 (LSNFWDWVIKRKLSTIDK) are Cytoplasmic-facing. The chain crosses the membrane as a helical span at residues 47–67 (ILLTLAISRITLIWEIYTWFT). Residues 68 to 87 (SVYGPSSFAIGMKLQILYFT) are Extracellular-facing. Residues 88-108 (WILSSHFSLWFATALSIFYLL) form a helical membrane-spanning segment. The Cytoplasmic portion of the chain corresponds to 109-124 (RIANCSWKIFLYLKWR). A helical membrane pass occupies residues 125-145 (LKQVIVGMLLASLVFLPGILT). Over 146-179 (QRTLEERPYRYGGNTSEDSMETDFARFTELILFN) the chain is Extracellular. N-linked (GlcNAc...) asparagine glycosylation is found at Asn-159 and Asn-179. Residues 180–200 (LTIFSVIPFSLASISFLLLIF) traverse the membrane as a helical segment. The Cytoplasmic portion of the chain corresponds to 201-229 (SLWKHLRKMQLSSRGHGDPSTKAHTNALR). A helical transmembrane segment spans residues 230–250 (IMVSFLLLYSIYFLSLLLSWI). Residues 251–260 (AQKHHSKLVD) are Extracellular-facing. Residues 261–281 (IIGIITGLMYPSAHSFILILG) form a helical membrane-spanning segment. Over 282-327 (NSKLMQTSLWILSHLRCRLKGENILNPSGNQVTSCYIFCIANKSVS) the chain is Cytoplasmic.

Belongs to the G-protein coupled receptor T2R family.

The protein resides in the membrane. Its function is as follows. Putative taste receptor which may play a role in the perception of bitterness. The chain is Taste receptor type 2 member 102 from Rattus norvegicus (Rat).